The following is a 122-amino-acid chain: Small ribosomal subunit protein uS12 (122 aa).

The disordered stretch occupies residues 1–45 (MPTTNQLVRKERKRQTKKTATPALQGSPQRRGVCTRVSTTTPKKP). Polar residues predominate over residues 18–28 (KTATPALQGSP). At aspartate 89 the chain carries 3-methylthioaspartic acid.

This sequence belongs to the universal ribosomal protein uS12 family. As to quaternary structure, part of the 30S ribosomal subunit. Contacts proteins S8 and S17. May interact with IF1 in the 30S initiation complex.

With S4 and S5 plays an important role in translational accuracy. In terms of biological role, interacts with and stabilizes bases of the 16S rRNA that are involved in tRNA selection in the A site and with the mRNA backbone. Located at the interface of the 30S and 50S subunits, it traverses the body of the 30S subunit contacting proteins on the other side and probably holding the rRNA structure together. The combined cluster of proteins S8, S12 and S17 appears to hold together the shoulder and platform of the 30S subunit. This Rubrobacter xylanophilus (strain DSM 9941 / JCM 11954 / NBRC 16129 / PRD-1) protein is Small ribosomal subunit protein uS12.